The primary structure comprises 342 residues: MATH domain and coiled-coil domain-containing protein At3g44800 (342 aa).

The region spanning 3–129 (YEKFTWVIKN…NNEVKIVAEV (127 aa)) is the MATH domain. Residues 253–327 (KVDWLERKLE…ALLEKEKGKV (75 aa)) are a coiled coil.

This Arabidopsis thaliana (Mouse-ear cress) protein is MATH domain and coiled-coil domain-containing protein At3g44800.